The primary structure comprises 509 residues: ATP synthase subunit alpha (509 aa).

169 to 176 contributes to the ATP binding site; it reads GDRQTGKT.

The protein belongs to the ATPase alpha/beta chains family. As to quaternary structure, F-type ATPases have 2 components, CF(1) - the catalytic core - and CF(0) - the membrane proton channel. CF(1) has five subunits: alpha(3), beta(3), gamma(1), delta(1), epsilon(1). CF(0) has three main subunits: a(1), b(2) and c(9-12). The alpha and beta chains form an alternating ring which encloses part of the gamma chain. CF(1) is attached to CF(0) by a central stalk formed by the gamma and epsilon chains, while a peripheral stalk is formed by the delta and b chains.

The protein localises to the cell inner membrane. The enzyme catalyses ATP + H2O + 4 H(+)(in) = ADP + phosphate + 5 H(+)(out). Its function is as follows. Produces ATP from ADP in the presence of a proton gradient across the membrane. The alpha chain is a regulatory subunit. The polypeptide is ATP synthase subunit alpha (Sinorhizobium medicae (strain WSM419) (Ensifer medicae)).